The sequence spans 492 residues: Beta-Ala-His dipeptidase (492 aa).

His-107 lines the Zn(2+) pocket. Asp-109 is a catalytic residue. Asp-140 contacts Zn(2+). Glu-174 serves as the catalytic Proton acceptor. A Zn(2+)-binding site is contributed by Glu-175. The residue at position 194 (Ser-194) is a Phosphoserine. The Zn(2+) site is built by Asp-203 and His-453.

The protein belongs to the peptidase M20A family. Homodimer. The cofactor is Zn(2+). Detected exclusively in kidney.

The protein resides in the secreted. The catalysed reaction is Preferential hydrolysis of the beta-Ala-|-His dipeptide (carnosine), and also anserine, Xaa-|-His dipeptides and other dipeptides including homocarnosine.. It catalyses the reaction carnosine + H2O = beta-alanine + L-histidine. The enzyme catalyses anserine + H2O = N(pros)-methyl-L-histidine + beta-alanine. It carries out the reaction L-alanyl-L-histidine + H2O = L-histidine + L-alanine. The catalysed reaction is glycyl-L-histidine + H2O = L-histidine + glycine. It catalyses the reaction L-homocarnosine + H2O = 4-aminobutanoate + L-histidine. Functionally, catalyzes the peptide bond hydrolysis in Xaa-His dipeptides, displaying the highest activity toward carnosine (beta-alanyl-L-histidine) and anserine (beta-alanyl-3-methyl-histidine). The polypeptide is Beta-Ala-His dipeptidase (Cndp1) (Rattus norvegicus (Rat)).